The following is a 371-amino-acid chain: D-erythrose-4-phosphate dehydrogenase (371 aa).

An NAD(+)-binding site is contributed by 12–13; sequence RI. Substrate is bound by residues 154–156, R200, 213–214, and R236; these read SCT and TK. C155 functions as the Nucleophile in the catalytic mechanism. Position 318 (N318) interacts with NAD(+).

It belongs to the glyceraldehyde-3-phosphate dehydrogenase family. Epd subfamily. Homotetramer.

It localises to the cytoplasm. It catalyses the reaction D-erythrose 4-phosphate + NAD(+) + H2O = 4-phospho-D-erythronate + NADH + 2 H(+). Its pathway is cofactor biosynthesis; pyridoxine 5'-phosphate biosynthesis; pyridoxine 5'-phosphate from D-erythrose 4-phosphate: step 1/5. In terms of biological role, catalyzes the NAD-dependent conversion of D-erythrose 4-phosphate to 4-phosphoerythronate. This chain is D-erythrose-4-phosphate dehydrogenase, found in Psychromonas ingrahamii (strain DSM 17664 / CCUG 51855 / 37).